The sequence spans 221 residues: Histidine biosynthesis bifunctional protein HisIE (221 aa).

The segment at 1-121 is phosphoribosyl-AMP cyclohydrolase; that stretch reads MNITKIDWQK…KKQQFANWAW (121 aa). Residues 122 to 221 form a phosphoribosyl-ATP pyrophosphohydrolase region; sequence FIKLEQHLKE…IGLHPEGGNK (100 aa).

The protein in the N-terminal section; belongs to the PRA-CH family. In the C-terminal section; belongs to the PRA-PH family.

Its subcellular location is the cytoplasm. The enzyme catalyses 1-(5-phospho-beta-D-ribosyl)-ATP + H2O = 1-(5-phospho-beta-D-ribosyl)-5'-AMP + diphosphate + H(+). It carries out the reaction 1-(5-phospho-beta-D-ribosyl)-5'-AMP + H2O = 1-(5-phospho-beta-D-ribosyl)-5-[(5-phospho-beta-D-ribosylamino)methylideneamino]imidazole-4-carboxamide. It functions in the pathway amino-acid biosynthesis; L-histidine biosynthesis; L-histidine from 5-phospho-alpha-D-ribose 1-diphosphate: step 2/9. Its pathway is amino-acid biosynthesis; L-histidine biosynthesis; L-histidine from 5-phospho-alpha-D-ribose 1-diphosphate: step 3/9. The chain is Histidine biosynthesis bifunctional protein HisIE (hisI) from Haemophilus influenzae (strain ATCC 51907 / DSM 11121 / KW20 / Rd).